The sequence spans 82 residues: Small ribosomal subunit protein bS16 (82 aa).

Belongs to the bacterial ribosomal protein bS16 family.

The sequence is that of Small ribosomal subunit protein bS16 from Vibrio vulnificus (strain CMCP6).